The following is a 400-amino-acid chain: Enoyl-[acyl-carrier-protein] reductase [NADH] (400 aa).

Residues 48–53, 74–75, 111–112, and 139–140 contribute to the NAD(+) site; these read GSSSGY, FE, DA, and LA. Y225 contributes to the substrate binding site. Catalysis depends on Y235, which acts as the Proton donor. Residues K244 and 273–275 each bind NAD(+); that span reads VVT.

It belongs to the TER reductase family. In terms of assembly, monomer.

The catalysed reaction is a 2,3-saturated acyl-[ACP] + NAD(+) = a (2E)-enoyl-[ACP] + NADH + H(+). It functions in the pathway lipid metabolism; fatty acid biosynthesis. Functionally, involved in the final reduction of the elongation cycle of fatty acid synthesis (FAS II). Catalyzes the reduction of a carbon-carbon double bond in an enoyl moiety that is covalently linked to an acyl carrier protein (ACP). In Shewanella baltica (strain OS223), this protein is Enoyl-[acyl-carrier-protein] reductase [NADH].